The sequence spans 432 residues: Carbohydrate esterase MZ0003 (432 aa).

A signal peptide spans 1-25; sequence MQRTCVLIVLIVTSTMWTPDPDVYA. Positions 266-271 match the GXSYXG catalytic site motif motif; the sequence is GHSRLG. The active-site Nucleophile is S268. Residues K272 and W359 each coordinate substrate. Residue H409 is the Charge relay system of the active site.

Belongs to the carbohydrate esterase 15 (CE15) family. It depends on Does not require metal ions for activity. as a cofactor.

Its subcellular location is the periplasm. Is inhibited by PMSF and by NaF in vitro, which is consistent with the catalytic nucleophile being a serine. Displays some glucuronoyl esterase activity in vitro, since it is able to hydrolyze methyl 4-O-methyl-D-glucopyranosyluronate, allyl D-glucuronate, benzyl D-glucuronate and D-glucuronic acid methyl ester. However, esters of glucuronic acid are probably not its biological substrate, as they are not present in the marine environment. Can also hydrolyze a range of other esters, including p-nitrophenyl acetate. More likely biologically-relevant substrates for MZ0003 and other marine bacterial CE15s are algal cell wall polysaccharides, as these would be readily available in this environment and could be used as energy sources. The sequence is that of Carbohydrate esterase MZ0003 from Unknown prokaryotic organism.